A 297-amino-acid polypeptide reads, in one-letter code: Ribonuclease H2 subunit A (297 aa).

The 228-residue stretch at 21–248 (PCVLGIDEAG…ASTIVEKRCV (228 aa)) folds into the RNase H type-2 domain. A divalent metal cation is bound by residues D27, E28, and D138.

This sequence belongs to the RNase HII family. Eukaryotic subfamily. Mn(2+) is required as a cofactor. The cofactor is Mg(2+).

The enzyme catalyses Endonucleolytic cleavage to 5'-phosphomonoester.. Its function is as follows. Catalytic subunit of RNase HII, an endonuclease that specifically degrades the RNA of RNA:DNA hybrids. Participates in DNA replication, possibly by mediating the removal of lagging-strand Okazaki fragment RNA primers during DNA replication. Mediates the excision of single ribonucleotides from DNA:RNA duplexes. The chain is Ribonuclease H2 subunit A (rnh-2) from Caenorhabditis elegans.